The sequence spans 252 residues: Imidazole glycerol phosphate synthase subunit HisF (252 aa).

Active-site residues include Asp-11 and Asp-130.

The protein belongs to the HisA/HisF family. As to quaternary structure, heterodimer of HisH and HisF.

It localises to the cytoplasm. The enzyme catalyses 5-[(5-phospho-1-deoxy-D-ribulos-1-ylimino)methylamino]-1-(5-phospho-beta-D-ribosyl)imidazole-4-carboxamide + L-glutamine = D-erythro-1-(imidazol-4-yl)glycerol 3-phosphate + 5-amino-1-(5-phospho-beta-D-ribosyl)imidazole-4-carboxamide + L-glutamate + H(+). Its pathway is amino-acid biosynthesis; L-histidine biosynthesis; L-histidine from 5-phospho-alpha-D-ribose 1-diphosphate: step 5/9. In terms of biological role, IGPS catalyzes the conversion of PRFAR and glutamine to IGP, AICAR and glutamate. The HisF subunit catalyzes the cyclization activity that produces IGP and AICAR from PRFAR using the ammonia provided by the HisH subunit. The polypeptide is Imidazole glycerol phosphate synthase subunit HisF (Thermococcus onnurineus (strain NA1)).